The primary structure comprises 916 residues: Protein translocase subunit SecA (916 aa).

ATP is bound by residues Gln87, 105–109 (GEGKT), and Asp507. Zn(2+) is bound by residues Cys900, Cys902, Cys911, and His912.

This sequence belongs to the SecA family. Monomer and homodimer. Part of the essential Sec protein translocation apparatus which comprises SecA, SecYEG and auxiliary proteins SecDF-YajC and YidC. Zn(2+) is required as a cofactor.

The protein resides in the cell inner membrane. It is found in the cytoplasm. The catalysed reaction is ATP + H2O + cellular proteinSide 1 = ADP + phosphate + cellular proteinSide 2.. Part of the Sec protein translocase complex. Interacts with the SecYEG preprotein conducting channel. Has a central role in coupling the hydrolysis of ATP to the transfer of proteins into and across the cell membrane, serving both as a receptor for the preprotein-SecB complex and as an ATP-driven molecular motor driving the stepwise translocation of polypeptide chains across the membrane. In Neisseria meningitidis serogroup B (strain ATCC BAA-335 / MC58), this protein is Protein translocase subunit SecA.